A 277-amino-acid chain; its full sequence is Undecaprenyl-diphosphatase (277 aa).

5 helical membrane passes run 85-105 (VNIVVAFLPAALLGLVFAGAI), 109-129 (LFAPVPVAIAFIVGGFVILWV), 188-208 (ATEFSFFLAIPTLMGATVYSV), 218-238 (ADIPLFGLGGLAAFFSAFLCV), and 256-276 (YRIGFGLFVLLSAHYGWVVWA).

This sequence belongs to the UppP family.

The protein resides in the cell inner membrane. It carries out the reaction di-trans,octa-cis-undecaprenyl diphosphate + H2O = di-trans,octa-cis-undecaprenyl phosphate + phosphate + H(+). In terms of biological role, catalyzes the dephosphorylation of undecaprenyl diphosphate (UPP). Confers resistance to bacitracin. The sequence is that of Undecaprenyl-diphosphatase from Herminiimonas arsenicoxydans.